Here is a 272-residue protein sequence, read N- to C-terminus: MKHIIFTDLDGTLIDHDTYSYDAARPALDLLKEKEIPLIFCTSKTRAELEVYVDELECHHPFISENGGAIFIPKDHFSIELKDVHEIGNYKVIEFGTSYTRIRGVLEDIRKKTGFKITGFGDLDAEGVSKDTGLDIRSAKLAKLREYDEAFRLEEDENATAKVIELIHAAGLNYTKGGRYWHIMGDNDKGKAVRALTEIYRQQFTEVVTIALGDSLNDLPMLKAVDIPFLVQKPDGKYDPSIILTEIKHAEGIGPVGWNNAIMDLIGKNNNI.

Catalysis depends on aspartate 8, which acts as the Nucleophile. Mg(2+)-binding residues include aspartate 8, aspartate 10, and aspartate 214.

This sequence belongs to the HAD-like hydrolase superfamily. MPGP family. In terms of assembly, monomer. Co(2+) serves as cofactor. The cofactor is Mg(2+). Requires Ni(2+) as cofactor.

The enzyme catalyses (2R)-2-O-(alpha-D-glucopyranosyl)-3-phospho-glycerate + H2O = (2R)-2-O-(alpha-D-glucopyranosyl)-glycerate + phosphate. It catalyses the reaction 2-O-(alpha-D-mannosyl)-3-phosphoglycerate + H2O = (2R)-2-O-(alpha-D-mannosyl)-glycerate + phosphate. Involved in the biosynthesis of glucosylglycerate. Catalyzes the dephosphorylation of glucosyl-3-phosphoglycerate (GPG) and mannosyl-3-phosphoglycerate (MPG) to glucosylglycerate (GG) and mannosylglycerate (MG), respectively. This is Glucosyl-3-phosphoglycerate/mannosyl-3-phosphoglycerate phosphatase from Methanococcoides burtonii (strain DSM 6242 / NBRC 107633 / OCM 468 / ACE-M).